Here is a 376-residue protein sequence, read N- to C-terminus: Palmitoyl-[acyl-carrier-protein] 4-desaturase 2, chloroplastic (376 aa).

Residues 1-33 (MELHLALRASPLPAADPGRRPPPPRGNFATNCT) constitute a chloroplast transit peptide. Fe cation is bound by residues Glu-114, Glu-149, His-152, Glu-202, Glu-235, and His-238.

It belongs to the fatty acid desaturase type 2 family. As to quaternary structure, homodimer. It depends on Fe(2+) as a cofactor. As to expression, preferentially expressed in the flower labellum.

The protein localises to the plastid. It is found in the chloroplast stroma. It carries out the reaction hexadecanoyl-[ACP] + 2 reduced [2Fe-2S]-[ferredoxin] + O2 + 2 H(+) = (4Z)-hexadecenoyl-[ACP] + 2 oxidized [2Fe-2S]-[ferredoxin] + 2 H2O. The enzyme catalyses octadecanoyl-[ACP] + 2 reduced [2Fe-2S]-[ferredoxin] + O2 + 2 H(+) = (9Z)-octadecenoyl-[ACP] + 2 oxidized [2Fe-2S]-[ferredoxin] + 2 H2O. It participates in lipid metabolism; fatty acid metabolism. In terms of biological role, converts stearoyl-ACP to oleoyl-ACP by introduction of a cis double bond between carbons 9 and 10 of the acyl chain. Converts palmitoyl-ACP to (4Z)-hexadec-4-enoyl-ACP by introduction of a cis double bond between carbons 4 and 5 of the acyl chain. Catalyzes the desaturation of saturated fatty acid 18:0 and 16:0 to generate 18:1 (delta-9) and 16:1 (delta-4) intermediates, expected to give rise to 9-alkenes and 12-alkenes, respectively. This Ophrys arachnitiformis subsp. archipelagi (Orchid) protein is Palmitoyl-[acyl-carrier-protein] 4-desaturase 2, chloroplastic (SAD2).